The chain runs to 449 residues: Sensor protein QseC (449 aa).

Residues methionine 1 to arginine 12 lie on the Cytoplasmic side of the membrane. A helical transmembrane segment spans residues leucine 13–tryptophan 33. The Periplasmic portion of the chain corresponds to lysine 34–alanine 156. A helical transmembrane segment spans residues leucine 157–isoleucine 177. At methionine 178 to tryptophan 449 the chain is on the cytoplasmic side. The region spanning aspartate 243 to tryptophan 449 is the Histidine kinase domain. Histidine 246 carries the post-translational modification Phosphohistidine; by autocatalysis.

The protein localises to the cell inner membrane. The catalysed reaction is ATP + protein L-histidine = ADP + protein N-phospho-L-histidine.. Its function is as follows. Member of a two-component regulatory system QseB/QseC. Activates the flagella regulon by activating transcription of FlhDC. May activate QseB by phosphorylation. The polypeptide is Sensor protein QseC (qseC) (Escherichia coli O157:H7).